Consider the following 345-residue polypeptide: 4-hydroxy-2-oxovalerate aldolase 1 (345 aa).

One can recognise a Pyruvate carboxyltransferase domain in the interval 9 to 261 (IRVTDTSLRD…RTGIDFFAIA (253 aa)). Position 17 to 18 (17 to 18 (RD)) interacts with substrate. Residue D18 participates in Mn(2+) binding. H21 functions as the Proton acceptor in the catalytic mechanism. Positions 171 and 200 each coordinate substrate. Mn(2+) is bound by residues H200 and H202. Y291 is a binding site for substrate.

It belongs to the 4-hydroxy-2-oxovalerate aldolase family.

The enzyme catalyses (S)-4-hydroxy-2-oxopentanoate = acetaldehyde + pyruvate. This is 4-hydroxy-2-oxovalerate aldolase 1 from Nocardia farcinica (strain IFM 10152).